A 152-amino-acid polypeptide reads, in one-letter code: Cell division protein SepF (152 aa).

It belongs to the SepF family. Homodimer. Interacts with FtsZ.

The protein resides in the cytoplasm. Cell division protein that is part of the divisome complex and is recruited early to the Z-ring. Probably stimulates Z-ring formation, perhaps through the cross-linking of FtsZ protofilaments. Its function overlaps with FtsA. The chain is Cell division protein SepF from Clostridioides difficile (strain 630) (Peptoclostridium difficile).